We begin with the raw amino-acid sequence, 244 residues long: Type III pantothenate kinase (244 aa).

7–14 (DIGNTRLK) contributes to the ATP binding site. Substrate is bound by residues Tyr-95 and 102–105 (GIDR). Asp-104 functions as the Proton acceptor in the catalytic mechanism. Thr-126 is a binding site for ATP. Thr-177 provides a ligand contact to substrate.

Belongs to the type III pantothenate kinase family. In terms of assembly, homodimer. It depends on NH4(+) as a cofactor. K(+) serves as cofactor.

The protein localises to the cytoplasm. The catalysed reaction is (R)-pantothenate + ATP = (R)-4'-phosphopantothenate + ADP + H(+). It participates in cofactor biosynthesis; coenzyme A biosynthesis; CoA from (R)-pantothenate: step 1/5. In terms of biological role, catalyzes the phosphorylation of pantothenate (Pan), the first step in CoA biosynthesis. The polypeptide is Type III pantothenate kinase (Acinetobacter baumannii (strain ACICU)).